We begin with the raw amino-acid sequence, 111 residues long: Thioredoxin 2 (111 aa).

In terms of domain architecture, Thioredoxin spans 2 to 109; that stretch reads SKGVITITDA…LLSFLDTHLN (108 aa). A disulfide bridge connects residues C33 and C36.

This sequence belongs to the thioredoxin family.

Participates in various redox reactions through the reversible oxidation of its active center dithiol to a disulfide and catalyzes dithiol-disulfide exchange reactions. This is Thioredoxin 2 (trxB) from Nostoc sp. (strain PCC 7120 / SAG 25.82 / UTEX 2576).